A 209-amino-acid chain; its full sequence is Thiamine-phosphate synthase (209 aa).

Residues 37-41 (QYRDK) and Asn-69 each bind 4-amino-2-methyl-5-(diphosphooxymethyl)pyrimidine. Mg(2+)-binding residues include Asp-70 and Asp-89. Ser-108 contacts 4-amino-2-methyl-5-(diphosphooxymethyl)pyrimidine. Residue 135–137 (SPT) participates in 2-[(2R,5Z)-2-carboxy-4-methylthiazol-5(2H)-ylidene]ethyl phosphate binding. Position 138 (Lys-138) interacts with 4-amino-2-methyl-5-(diphosphooxymethyl)pyrimidine. Residues Gly-165 and 185–186 (VS) each bind 2-[(2R,5Z)-2-carboxy-4-methylthiazol-5(2H)-ylidene]ethyl phosphate.

Belongs to the thiamine-phosphate synthase family. Mg(2+) is required as a cofactor.

It carries out the reaction 2-[(2R,5Z)-2-carboxy-4-methylthiazol-5(2H)-ylidene]ethyl phosphate + 4-amino-2-methyl-5-(diphosphooxymethyl)pyrimidine + 2 H(+) = thiamine phosphate + CO2 + diphosphate. It catalyses the reaction 2-(2-carboxy-4-methylthiazol-5-yl)ethyl phosphate + 4-amino-2-methyl-5-(diphosphooxymethyl)pyrimidine + 2 H(+) = thiamine phosphate + CO2 + diphosphate. The enzyme catalyses 4-methyl-5-(2-phosphooxyethyl)-thiazole + 4-amino-2-methyl-5-(diphosphooxymethyl)pyrimidine + H(+) = thiamine phosphate + diphosphate. It functions in the pathway cofactor biosynthesis; thiamine diphosphate biosynthesis; thiamine phosphate from 4-amino-2-methyl-5-diphosphomethylpyrimidine and 4-methyl-5-(2-phosphoethyl)-thiazole: step 1/1. In terms of biological role, condenses 4-methyl-5-(beta-hydroxyethyl)thiazole monophosphate (THZ-P) and 2-methyl-4-amino-5-hydroxymethyl pyrimidine pyrophosphate (HMP-PP) to form thiamine monophosphate (TMP). The sequence is that of Thiamine-phosphate synthase from Halorhodospira halophila (strain DSM 244 / SL1) (Ectothiorhodospira halophila (strain DSM 244 / SL1)).